Consider the following 411-residue polypeptide: Stearoyl-[acyl-carrier-protein] 9-desaturase 2, chloroplastic (411 aa).

A chloroplast-targeting transit peptide spans 1–44; the sequence is MALLLNSTITVAMKQNPLVAVSFPRTTCLGSSFSPPRLLRVSCV. The Fe cation site is built by E148, E186, H189, E239, E272, and H275.

The protein belongs to the fatty acid desaturase type 2 family. In terms of assembly, homodimer. Fe(2+) is required as a cofactor. Preferentially expressed in roots and flowers.

Its subcellular location is the plastid. The protein resides in the chloroplast. The catalysed reaction is octadecanoyl-[ACP] + 2 reduced [2Fe-2S]-[ferredoxin] + O2 + 2 H(+) = (9Z)-octadecenoyl-[ACP] + 2 oxidized [2Fe-2S]-[ferredoxin] + 2 H2O. Its pathway is lipid metabolism; fatty acid metabolism. Converts stearoyl-ACP to oleoyl-ACP by introduction of a cis double bond between carbons 9 and 10 of the acyl chain. Exhibits delta-9 palmitoyl-[acyl-carrier-protein] desaturase (PAD) activity. Involved in omega-7 monounsaturated fatty acid biosynthesis, especially in the endosperm oil. This chain is Stearoyl-[acyl-carrier-protein] 9-desaturase 2, chloroplastic (S-ACP-DES2), found in Arabidopsis thaliana (Mouse-ear cress).